A 172-amino-acid polypeptide reads, in one-letter code: Bcl-2-related protein A1 (172 aa).

Residues 77 to 97 carry the BH1 motif; the sequence is KEFEDGIINWGRIVTIFAFGG. The BH2 motif lies at 132–147; it reads EWIRQNGGWEDGFIKK.

The protein belongs to the Bcl-2 family. Interacts directly with BCL2L11/BIM and PMAIP1. Interacts directly with BAK1, BID, BMF and BBC3. Interacts with BOP. Interacts with isoform 3, isoform 4 and isoform 5 of ING4. Interacts with UBQLN4. In terms of tissue distribution, expressed in hemopoietic tissues, including bone marrow, spleen and thymus.

The protein resides in the cytoplasm. Retards apoptosis induced by IL-3 deprivation. May function in the response of hemopoietic cells to external signals and in maintaining endothelial survival during infection. Can inhibit apoptosis induced by serum starvation in the mammary epithelial cell line HC11. This Mus musculus (Mouse) protein is Bcl-2-related protein A1 (Bcl2a1).